The chain runs to 805 residues: Ubiquitin carboxyl-terminal hydrolase 5 (805 aa).

The Rhodanese domain maps to 159–283; it reads HGDALLLIDV…WVKLGGAYQS (125 aa). The segment at 359–380 is disordered; sequence RNSPTVQKFSPHPPTTLSKLNT. Residues 446–804 enclose the USP domain; sequence VGLENIGNCC…SAYVLFYERI (359 aa). Residue cysteine 455 is the Nucleophile of the active site. The Proton acceptor role is filled by histidine 761.

Belongs to the peptidase C19 family.

It carries out the reaction Thiol-dependent hydrolysis of ester, thioester, amide, peptide and isopeptide bonds formed by the C-terminal Gly of ubiquitin (a 76-residue protein attached to proteins as an intracellular targeting signal).. In Saccharomyces cerevisiae (strain ATCC 204508 / S288c) (Baker's yeast), this protein is Ubiquitin carboxyl-terminal hydrolase 5 (UBP5).